Here is a 662-residue protein sequence, read N- to C-terminus: Protein Aster-C (662 aa).

The disordered stretch occupies residues 1 to 34; that stretch reads MEGAPTVRQVMNEGDSSLATDLQEDVEENPSPTV. One can recognise a GRAM domain in the interval 69–136; the sequence is EEYRRQFTHL…KNITFMTKEK (68 aa). Disordered stretches follow at residues 212–237 and 249–284; these read SIED…EKLS and RVSE…LPTL. Positions 265–276 are enriched in basic and acidic residues; that stretch reads LGKEESQNEKQT. Positions 326 to 497 constitute a VASt domain; sequence HGRLFINRIF…DLLIEESVLN (172 aa). Residues 557-577 form a helical membrane-spanning segment; the sequence is LIVVMSIFVLLLVLLNVTLFL.

The protein localises to the endoplasmic reticulum membrane. It is found in the cell membrane. Its function is as follows. Cholesterol transporter that mediates non-vesicular transport of cholesterol from the plasma membrane (PM) to the endoplasmic reticulum (ER). Contains unique domains for binding cholesterol and the PM, thereby serving as a molecular bridge for the transfer of cholesterol from the PM to the ER. Plays a crucial role in cholesterol homeostasis and has the unique ability to localize to the PM based on the level of membrane cholesterol. In lipid-poor conditions localizes to the ER membrane and in response to excess cholesterol in the PM is recruited to the endoplasmic reticulum-plasma membrane contact sites (EPCS) which is mediated by the GRAM domain. At the EPCS, the sterol-binding VASt/ASTER domain binds to the cholesterol in the PM and facilitates its transfer from the PM to ER. This is Protein Aster-C (GRAMD1C) from Homo sapiens (Human).